The following is a 201-amino-acid chain: UPF0301 protein CE2927 (201 aa).

This sequence belongs to the UPF0301 (AlgH) family.

In Corynebacterium efficiens (strain DSM 44549 / YS-314 / AJ 12310 / JCM 11189 / NBRC 100395), this protein is UPF0301 protein CE2927.